The following is a 171-amino-acid chain: LIM domain transcription factor LMO4-B (171 aa).

Residues 1–19 (MVNNRISESTTTAVSNNGS) are compositionally biased toward polar residues. The disordered stretch occupies residues 1 to 20 (MVNNRISESTTTAVSNNGSP). LIM zinc-binding domains follow at residues 22–84 (KACA…LFGN) and 86–148 (GACN…GLLN).

In terms of biological role, acts as a positive cofactor of GATA transcription factors to establish the identity of the ventral mesoderm during gastrulation. Down-regulation in the dorsal mesoderm is necessary for the proper formation of this territory since, when present, lmo4 may bind ldb1 and restrict the availability of this cofactor for Spemman organizer transcription factors. At neurula stages, suppresses primary neuron differentiation and modulates gene expression at the Isthmic Organizer of the midbrain-hindbrain boundary. The polypeptide is LIM domain transcription factor LMO4-B (lmo4-b) (Xenopus laevis (African clawed frog)).